We begin with the raw amino-acid sequence, 432 residues long: Peptidase B (432 aa).

The Mn(2+) site is built by Lys-196 and Asp-201. Lys-208 is a catalytic residue. 3 residues coordinate Mn(2+): Asp-219, Asp-278, and Glu-280. Arg-282 is an active-site residue.

It belongs to the peptidase M17 family. In terms of assembly, homohexamer. Mn(2+) serves as cofactor.

It is found in the cytoplasm. It catalyses the reaction Release of an N-terminal amino acid, Xaa, from a peptide or arylamide. Xaa is preferably Glu or Asp but may be other amino acids, including Leu, Met, His, Cys and Gln.. In terms of biological role, probably plays an important role in intracellular peptide degradation. The polypeptide is Peptidase B (Yersinia pseudotuberculosis serotype O:1b (strain IP 31758)).